Consider the following 665-residue polypeptide: tRNA 5-methylaminomethyl-2-thiouridine biosynthesis bifunctional protein MnmC (665 aa).

The tRNA (mnm(5)s(2)U34)-methyltransferase stretch occupies residues 1-235; sequence MTITRHAQID…KWEVLRGTFI (235 aa). An FAD-dependent cmnm(5)s(2)U34 oxidoreductase region spans residues 266 to 665; the sequence is IGAGLAGCAT…RGKGKQTVGH (400 aa).

This sequence in the N-terminal section; belongs to the methyltransferase superfamily. tRNA (mnm(5)s(2)U34)-methyltransferase family. It in the C-terminal section; belongs to the DAO family. Requires FAD as cofactor.

The protein resides in the cytoplasm. The enzyme catalyses 5-aminomethyl-2-thiouridine(34) in tRNA + S-adenosyl-L-methionine = 5-methylaminomethyl-2-thiouridine(34) in tRNA + S-adenosyl-L-homocysteine + H(+). Its function is as follows. Catalyzes the last two steps in the biosynthesis of 5-methylaminomethyl-2-thiouridine (mnm(5)s(2)U) at the wobble position (U34) in tRNA. Catalyzes the FAD-dependent demodification of cmnm(5)s(2)U34 to nm(5)s(2)U34, followed by the transfer of a methyl group from S-adenosyl-L-methionine to nm(5)s(2)U34, to form mnm(5)s(2)U34. This is tRNA 5-methylaminomethyl-2-thiouridine biosynthesis bifunctional protein MnmC from Pseudomonas syringae pv. syringae (strain B728a).